A 738-amino-acid polypeptide reads, in one-letter code: Zinc finger protein 235 (738 aa).

The KRAB domain maps to 8–79 (VTFKDVAVAF…ELQTQRGKHS (72 aa)). Residues 263–285 (YQGNECEEAFNDSSSLELHKQVH) form a C2H2-type 1; degenerate zinc finger. C2H2-type zinc fingers lie at residues 319 to 341 (YWCH…QRVH), 347 to 369 (YTCH…LPIH), 375 to 397 (YRCD…CRVH), 403 to 425 (YKCE…ERIH), 431 to 453 (YKCG…QRVH), 459 to 481 (YKCD…QRVH), 487 to 509 (YKCE…QRVH), 515 to 537 (FRCN…QRVH), 543 to 565 (YKCE…QRVH), 571 to 593 (YKCE…QSVH), 599 to 621 (FKCD…QRVH), 627 to 649 (YKCD…QIIH), 655 to 677 (FKCE…QRVH), 683 to 705 (YTCQ…QRVH), and 711 to 733 (YICD…QRVH).

Belongs to the krueppel C2H2-type zinc-finger protein family.

It is found in the nucleus. In terms of biological role, may be involved in transcriptional regulation. This is Zinc finger protein 235 (ZNF235) from Homo sapiens (Human).